Reading from the N-terminus, the 561-residue chain is DNA ligase (561 aa).

Position 249 (Glu-249) interacts with ATP. Lys-251 acts as the N6-AMP-lysine intermediate in catalysis. 6 residues coordinate ATP: Arg-256, Arg-271, Glu-301, Phe-340, Arg-417, and Lys-423.

This sequence belongs to the ATP-dependent DNA ligase family. It depends on Mg(2+) as a cofactor.

It catalyses the reaction ATP + (deoxyribonucleotide)n-3'-hydroxyl + 5'-phospho-(deoxyribonucleotide)m = (deoxyribonucleotide)n+m + AMP + diphosphate.. DNA ligase that seals nicks in double-stranded DNA during DNA replication, DNA recombination and DNA repair. The polypeptide is DNA ligase (Methanothermobacter thermautotrophicus (strain ATCC 29096 / DSM 1053 / JCM 10044 / NBRC 100330 / Delta H) (Methanobacterium thermoautotrophicum)).